Consider the following 147-residue polypeptide: MSNFTAEDKAAITSLWGKVNVEDAGGETLGRLLVVYPWTQRFFDSFGSLSSPSAIMGNPKVKAHGVKVLTSLGEAIKNLDDLKGTFGQLSELHCDKLHVDPENFRLLGNVLVTVLAILHGKEFTPEVQASWQKMVAGVASALASRYH.

In terms of domain architecture, Globin spans 3-147 (NFTAEDKAAI…VASALASRYH (145 aa)). Heme b-binding residues include H64 and H93.

Belongs to the globin family. Heterotetramer of two alpha chains and two gamma chains in fetal hemoglobin (Hb F). Red blood cells.

In terms of biological role, gamma chains make up the fetal hemoglobin F, in combination with alpha chains. This chain is Hemoglobin subunit gamma (HBG), found in Lagothrix lagotricha (Brown woolly monkey).